Reading from the N-terminus, the 267-residue chain is Formamidopyrimidine-DNA glycosylase (267 aa).

Pro2 acts as the Schiff-base intermediate with DNA in catalysis. Glu3 serves as the catalytic Proton donor. The active-site Proton donor; for beta-elimination activity is Lys53. DNA contacts are provided by His82 and Arg100. The FPG-type zinc-finger motif lies at 230 to 264 (AVYGREGLPCPACGRPVERRVVAGRGTHFCPTCQG). Catalysis depends on Arg254, which acts as the Proton donor; for delta-elimination activity.

Belongs to the FPG family. As to quaternary structure, monomer. The cofactor is Zn(2+).

The enzyme catalyses Hydrolysis of DNA containing ring-opened 7-methylguanine residues, releasing 2,6-diamino-4-hydroxy-5-(N-methyl)formamidopyrimidine.. It carries out the reaction 2'-deoxyribonucleotide-(2'-deoxyribose 5'-phosphate)-2'-deoxyribonucleotide-DNA = a 3'-end 2'-deoxyribonucleotide-(2,3-dehydro-2,3-deoxyribose 5'-phosphate)-DNA + a 5'-end 5'-phospho-2'-deoxyribonucleoside-DNA + H(+). Functionally, involved in base excision repair of DNA damaged by oxidation or by mutagenic agents. Acts as a DNA glycosylase that recognizes and removes damaged bases. Has a preference for oxidized purines, such as 7,8-dihydro-8-oxoguanine (8-oxoG). Has AP (apurinic/apyrimidinic) lyase activity and introduces nicks in the DNA strand. Cleaves the DNA backbone by beta-delta elimination to generate a single-strand break at the site of the removed base with both 3'- and 5'-phosphates. This is Formamidopyrimidine-DNA glycosylase from Thermus thermophilus (strain ATCC BAA-163 / DSM 7039 / HB27).